A 648-amino-acid polypeptide reads, in one-letter code: TBC1 domain family member 17 (648 aa).

The interval 218–309 (DPYSTTFSSF…PELKNRIFSG (92 aa)) is required for interaction with OPTN. The tract at residues 240-259 (PQPEGAASDLPPPPDDEPEP) is disordered. One can recognise a Rab-GAP TBC domain in the interval 310–520 (GLSPSLRREA…RLWEVLWTGL (211 aa)). Positions 594 to 648 (LAPPAEPHSPSPTASPLPLSPTRAPPTPPPSTDTAPQPDSSLEILPEEEDEGADS) are disordered. Positions 597–624 (PAEPHSPSPTASPLPLSPTRAPPTPPPS) are enriched in pro residues. Phosphoserine occurs at positions 602 and 604. Thr-606 is modified (phosphothreonine). At Ser-608 the chain carries Phosphoserine. Thr-615 carries the post-translational modification Phosphothreonine. Positions 625 to 634 (TDTAPQPDSS) are enriched in low complexity. The span at 638 to 648 (LPEEEDEGADS) shows a compositional bias: acidic residues.

In terms of assembly, interacts with OPTN; this interaction mediates TBC1D17 transient association with Rab8.

It localises to the cytoplasmic vesicle. It is found in the autophagosome. The protein resides in the cytoplasm. The protein localises to the recycling endosome. In terms of biological role, probable RAB GTPase-activating protein that inhibits RAB8A/B function. Reduces Rab8 recruitment to tubules emanating from the endocytic recycling compartment (ERC) and inhibits Rab8-mediated endocytic trafficking, such as that of transferrin receptor (TfR). Involved in regulation of autophagy. The polypeptide is TBC1 domain family member 17 (Homo sapiens (Human)).